The following is a 311-amino-acid chain: Homeobox-leucine zipper protein HOX1 (311 aa).

2 disordered regions span residues 29–69 (AGGA…SDHR) and 97–160 (AETT…KKLR). Residues 119–145 (SSPNSTLSSLSGKRGAPSAATAAAAAA) show a composition bias toward low complexity. The segment at residues 154–213 (GSRKKLRLSKDQAAVLEDTFKEHNTLNPKQKAALARQLNLKPRQVEVWFQNRRARTKLKQ) is a DNA-binding region (homeobox). Positions 212–256 (KQTEVDCELLKRCCETLTDENRRLHRELQELRALKLATAAAAPHH) are leucine-zipper. The disordered stretch occupies residues 279–311 (SAATTTRNNSGAAPARPVPTRPWPPAAAQRSSA). Polar residues predominate over residues 280-289 (AATTTRNNSG). Over residues 294-303 (RPVPTRPWPP) the composition is skewed to pro residues.

Belongs to the HD-ZIP homeobox family. Class II subfamily. In terms of assembly, homodimer. May form a heterodimer with HOX2, HOX3 or HOX7. As to expression, expressed in root provascular and vascular cylinder, provascular and vascular strands of leaves, provascular and vascular strands of the whole panicle, in mature embryo provascular bundles of scutellum and embryonic axis and provascular and vascular strands of young immature spikelet organs. Expressed in differentiating and differentiated xylem and phloem elements, and in outer and inner bundle sheath cells of all vascular bundles. Expressed in auricles, ligules, culm, guard cells brac hairs and pollen.

It localises to the nucleus. Functionally, probable transcription repressor involved leaf development. Binds to the DNA sequence 5'-CAAT[GC]ATTG-3'. May act as a regulatory switch to specify provascular cell fate. The sequence is that of Homeobox-leucine zipper protein HOX1 (HOX1) from Oryza sativa subsp. indica (Rice).